We begin with the raw amino-acid sequence, 282 residues long: Probable protein phosphatase 2C 10 (282 aa).

The region spanning 34–281 is the PPM-type phosphatase domain; sequence KFGYSLVKGK…DDISCIVVRL (248 aa). Mn(2+) is bound by residues aspartate 71, glycine 72, aspartate 233, and aspartate 272.

The protein belongs to the PP2C family. The cofactor is Mg(2+). Mn(2+) serves as cofactor.

It catalyses the reaction O-phospho-L-seryl-[protein] + H2O = L-seryl-[protein] + phosphate. The catalysed reaction is O-phospho-L-threonyl-[protein] + H2O = L-threonyl-[protein] + phosphate. This Arabidopsis thaliana (Mouse-ear cress) protein is Probable protein phosphatase 2C 10.